A 294-amino-acid chain; its full sequence is 4-hydroxy-tetrahydrodipicolinate synthase (294 aa).

T47 provides a ligand contact to pyruvate. Y135 functions as the Proton donor/acceptor in the catalytic mechanism. K163 acts as the Schiff-base intermediate with substrate in catalysis. I206 serves as a coordination point for pyruvate.

This sequence belongs to the DapA family. As to quaternary structure, homodimer.

The protein resides in the cytoplasm. It carries out the reaction L-aspartate 4-semialdehyde + pyruvate = (2S,4S)-4-hydroxy-2,3,4,5-tetrahydrodipicolinate + H2O + H(+). It participates in amino-acid biosynthesis; L-lysine biosynthesis via DAP pathway; (S)-tetrahydrodipicolinate from L-aspartate: step 3/4. Catalyzes the condensation of (S)-aspartate-beta-semialdehyde [(S)-ASA] and pyruvate to 4-hydroxy-tetrahydrodipicolinate (HTPA). In Staphylococcus epidermidis (strain ATCC 35984 / DSM 28319 / BCRC 17069 / CCUG 31568 / BM 3577 / RP62A), this protein is 4-hydroxy-tetrahydrodipicolinate synthase.